A 357-amino-acid polypeptide reads, in one-letter code: Peptide chain release factor 1 (357 aa).

Gln-233 carries the post-translational modification N5-methylglutamine.

Belongs to the prokaryotic/mitochondrial release factor family. Post-translationally, methylated by PrmC. Methylation increases the termination efficiency of RF1.

It is found in the cytoplasm. Functionally, peptide chain release factor 1 directs the termination of translation in response to the peptide chain termination codons UAG and UAA. This is Peptide chain release factor 1 from Leuconostoc citreum (strain KM20).